Reading from the N-terminus, the 365-residue chain is Carbamoyl phosphate synthase small chain (365 aa).

CPSase stretches follow at residues 1-166 and 1-169; these read MKRQ…PSPG and MKRQ…GRGH. Residues S45, G218, and G220 each contribute to the L-glutamine site. Residues 170–357 form the Glutamine amidotransferase type-1 domain; that stretch reads RVVLVDFGMK…LTMIENFKKE (188 aa). The active-site Nucleophile is the C245. L-glutamine contacts are provided by L246, Q249, N287, G289, and Y290. Catalysis depends on residues H330 and E332.

The protein belongs to the CarA family. As to quaternary structure, composed of two chains; the small (or glutamine) chain promotes the hydrolysis of glutamine to ammonia, which is used by the large (or ammonia) chain to synthesize carbamoyl phosphate. Tetramer of heterodimers (alpha,beta)4.

It catalyses the reaction hydrogencarbonate + L-glutamine + 2 ATP + H2O = carbamoyl phosphate + L-glutamate + 2 ADP + phosphate + 2 H(+). It carries out the reaction L-glutamine + H2O = L-glutamate + NH4(+). The protein operates within amino-acid biosynthesis; L-arginine biosynthesis; carbamoyl phosphate from bicarbonate: step 1/1. It participates in pyrimidine metabolism; UMP biosynthesis via de novo pathway; (S)-dihydroorotate from bicarbonate: step 1/3. In terms of biological role, small subunit of the glutamine-dependent carbamoyl phosphate synthetase (CPSase). CPSase catalyzes the formation of carbamoyl phosphate from the ammonia moiety of glutamine, carbonate, and phosphate donated by ATP, constituting the first step of 2 biosynthetic pathways, one leading to arginine and/or urea and the other to pyrimidine nucleotides. The small subunit (glutamine amidotransferase) binds and cleaves glutamine to supply the large subunit with the substrate ammonia. The sequence is that of Carbamoyl phosphate synthase small chain from Bacillus anthracis.